We begin with the raw amino-acid sequence, 342 residues long: Galactose mutarotase (342 aa).

Serine 14 bears the Phosphoserine mark. Beta-D-galactose is bound by residues 81-82 and histidine 107; that span reads NR. Phosphoserine is present on serine 124. The Proton donor role is filled by histidine 176. Residues 176-178, aspartate 243, glutamine 279, and glutamate 307 contribute to the beta-D-galactose site; that span reads HSY. Glutamate 307 acts as the Proton acceptor in catalysis.

The protein belongs to the aldose epimerase family. As to quaternary structure, monomer.

It is found in the cytoplasm. It carries out the reaction alpha-D-galactose = beta-D-galactose. It catalyses the reaction alpha-D-glucose = beta-D-glucose. It functions in the pathway carbohydrate metabolism; hexose metabolism. It participates in carbohydrate metabolism; galactose metabolism. Its function is as follows. Mutarotase that catalyzes the interconversion of beta-D-galactose and alpha-D-galactose during galactose metabolism. Beta-D-galactose is metabolized in the liver into glucose 1-phosphate, the primary metabolic fuel, by the action of four enzymes that constitute the Leloir pathway: GALM, GALK1 (galactokinase), GALT (galactose-1-phosphate uridylyltransferase) and GALE (UDP-galactose-4'-epimerase). Involved in the maintenance of the equilibrium between the beta- and alpha-anomers of galactose, therefore ensuring a sufficient supply of the alpha-anomer for GALK1. Also active on D-glucose although shows a preference for galactose over glucose. This chain is Galactose mutarotase (Galm), found in Rattus norvegicus (Rat).